A 148-amino-acid chain; its full sequence is Stathmin (148 aa).

The SLD domain maps to 4 to 145; sequence SDIQVKELEK…NKEGKDPGEA (142 aa). Ser16 carries the phosphoserine; by PKA modification. Ser38 is subject to Phosphoserine; by CDK1. The stretch at 41–140 forms a coiled coil; that stretch reads KKKDLSLEEI…EEVRKNKEGK (100 aa). Ser63 is modified (phosphoserine; by PKA). Residues 122-148 form a disordered region; that stretch reads RLREKDKHIEEVRKNKEGKDPGEAETN.

Belongs to the stathmin family. Binds to two alpha/beta-tubulin heterodimers. Post-translationally, many different phosphorylated forms are observed depending on specific combinations among the sites which can be phosphorylated. MAPK is responsible for the phosphorylation of stathmin in response to NGF.

It localises to the cytoplasm. It is found in the cytoskeleton. Involved in the regulation of the microtubule (MT) filament system by destabilizing microtubules. It prevents assembly and promotes disassembly of microtubules. This is Stathmin (STMN1) from Gallus gallus (Chicken).